A 396-amino-acid chain; its full sequence is L-cysteine desulfidase (396 aa).

The Proton acceptor role is filled by Cys23. Positions 288, 330, and 337 each coordinate [4Fe-4S] cluster.

It belongs to the L-cysteine desulfidase family. In terms of assembly, homotrimer. [4Fe-4S] cluster is required as a cofactor.

It carries out the reaction L-cysteine + H2O = hydrogen sulfide + pyruvate + NH4(+) + H(+). Its function is as follows. Catalyzes the cleavage of L-cysteine to form 2-aminoprop-2-enoate and sulfide. The former then spontaneously hydrolyzes to pyruvate and NH(3). May be responsible for the production of sulfide required for the biosynthesis of iron-sulfur centers in this archaea. This chain is L-cysteine desulfidase, found in Methanococcus maripaludis (strain C6 / ATCC BAA-1332).